A 356-amino-acid polypeptide reads, in one-letter code: Protein pelota homolog (356 aa).

Belongs to the eukaryotic release factor 1 family. Pelota subfamily. As to quaternary structure, monomer. A divalent metal cation serves as cofactor.

The protein localises to the cytoplasm. Its function is as follows. May function in recognizing stalled ribosomes, interact with stem-loop structures in stalled mRNA molecules, and effect endonucleolytic cleavage of the mRNA. May play a role in the release non-functional ribosomes and degradation of damaged mRNAs. Has endoribonuclease activity. This Staphylothermus marinus (strain ATCC 43588 / DSM 3639 / JCM 9404 / F1) protein is Protein pelota homolog.